A 466-amino-acid polypeptide reads, in one-letter code: 3-isopropylmalate dehydratase large subunit (466 aa).

3 residues coordinate [4Fe-4S] cluster: C347, C407, and C410.

Belongs to the aconitase/IPM isomerase family. LeuC type 1 subfamily. As to quaternary structure, heterodimer of LeuC and LeuD. [4Fe-4S] cluster is required as a cofactor.

The enzyme catalyses (2R,3S)-3-isopropylmalate = (2S)-2-isopropylmalate. Its pathway is amino-acid biosynthesis; L-leucine biosynthesis; L-leucine from 3-methyl-2-oxobutanoate: step 2/4. Catalyzes the isomerization between 2-isopropylmalate and 3-isopropylmalate, via the formation of 2-isopropylmaleate. The sequence is that of 3-isopropylmalate dehydratase large subunit from Salmonella paratyphi A (strain ATCC 9150 / SARB42).